The sequence spans 259 residues: Insulin-induced gene 1 protein (259 aa).

The Cytoplasmic portion of the chain corresponds to 1–66; sequence MPRLHDHVWN…ARPGSWHHDL (66 aa). The tract at residues 36 to 55 is disordered; that stretch reads PGVPEPEHAPRGQRAGTTGC. A helical membrane pass occupies residues 67–89; it reads VQRSLVLFSFGVVLALVLNLLQI. Topologically, residues 90-108 are extracellular; it reads QRNVTLFPDEVIATIFSSA. A helical transmembrane segment spans residues 109 to 126; sequence WWVPPCCGTAAAVVGLLY. Over 127-141 the chain is Cytoplasmic; the sequence is PCIDSHLGEPHKFKR. Residues lysine 138 and lysine 140 each participate in a glycyl lysine isopeptide (Lys-Gly) (interchain with G-Cter in ubiquitin) cross-link. Residues 142 to 164 form a helical membrane-spanning segment; the sequence is EWASVMRCIAVFVGINHASAKLD. The Extracellular portion of the chain corresponds to 165-167; it reads FAN. The chain crosses the membrane as a helical span at residues 168–186; it reads NVQLSLTLAALSLGLWWTF. The Cytoplasmic portion of the chain corresponds to 187-191; that stretch reads DRSRS. Position 189 is a phosphoserine (serine 189). A helical transmembrane segment spans residues 192–213; it reads GLGLGITIAFLATLITQFLVYN. The Extracellular segment spans residues 214–227; it reads GVYQYTSPDFLYIR. The helical transmembrane segment at 228–245 threads the bilayer; it reads SWLPCIFFSGGVTVGNIG. At 246–259 the chain is on the cytoplasmic side; it reads RQLAMGVPEKPHSD. A KxHxx motif is present at residues 253 to 259; the sequence is PEKPHSD.

The protein belongs to the INSIG family. In terms of assembly, interacts with SCAP; interaction is direct and only takes place in the presence of sterols; it prevents interaction between SCAP and the coat protein complex II (COPII). Associates with the SCAP-SREBP complex (composed of SCAP and SREBF1/SREBP1 or SREBF2/SREBP2); association is mediated via its interaction with SCAP and only takes place in the presence of sterols. Interaction with SCAP is mutually exclusive with PAQR3. Interacts with HMGCR (via its SSD); the interaction, accelerated by sterols, leads to the recruitment of HMGCR to AMFR/gp78 for its ubiquitination by the sterol-mediated ERAD pathway. Interacts with AMFR/gp78 (via its membrane domain); the interaction recruits HMCR at the ER membrane for its ubiquitination and degradation by the sterol-mediated ERAD pathway. Interacts with SOAT2/ACAT2; leading to promote recruitment of AMFR/gp78 and subsequent ubiquitination of SOAT2/ACAT2. Interacts with RNF139. Interacts with RNF145. In terms of processing, phosphorylation at Ser-189 by PCK1 reduces binding to oxysterol, disrupting the interaction between INSIG1 and SCAP, thereby promoting nuclear translocation of SREBP proteins (SREBF1/SREBP1 or SREBF2/SREBP2) and subsequent transcription of downstream lipogenesis-related genes. Ubiquitinated by AMFR/gp78 in response to sterol deprivation, leading to its degradation: when the SCAP-SREBP complex becomes dissociated from INSIG1, INSIG1 is then ubiquitinated and degraded in proteasomes. Although ubiquitination is required for rapid INSIG1 degradation, it is not required for release of the SCAP-SREBP complex. Ubiquitinated by RNF139.

The protein resides in the endoplasmic reticulum membrane. Its function is as follows. Oxysterol-binding protein that mediates feedback control of cholesterol synthesis by controlling both endoplasmic reticulum to Golgi transport of SCAP and degradation of HMGCR. Acts as a negative regulator of cholesterol biosynthesis by mediating the retention of the SCAP-SREBP complex in the endoplasmic reticulum, thereby blocking the processing of sterol regulatory element-binding proteins (SREBPs) SREBF1/SREBP1 and SREBF2/SREBP2. Binds oxysterol, including 25-hydroxycholesterol, regulating interaction with SCAP and retention of the SCAP-SREBP complex in the endoplasmic reticulum. In presence of oxysterol, interacts with SCAP, retaining the SCAP-SREBP complex in the endoplasmic reticulum, thereby preventing SCAP from escorting SREBF1/SREBP1 and SREBF2/SREBP2 to the Golgi. Sterol deprivation or phosphorylation by PCK1 reduce oxysterol-binding, disrupting the interaction between INSIG1 and SCAP, thereby promoting Golgi transport of the SCAP-SREBP complex, followed by processing and nuclear translocation of SREBF1/SREBP1 and SREBF2/SREBP2. Also regulates cholesterol synthesis by regulating degradation of HMGCR: initiates the sterol-mediated ubiquitin-mediated endoplasmic reticulum-associated degradation (ERAD) of HMGCR via recruitment of the reductase to the ubiquitin ligases AMFR/gp78 and/or RNF139. Also regulates degradation of SOAT2/ACAT2 when the lipid levels are low: initiates the ubiquitin-mediated degradation of SOAT2/ACAT2 via recruitment of the ubiquitin ligases AMFR/gp78. The polypeptide is Insulin-induced gene 1 protein (Mus musculus (Mouse)).